The sequence spans 186 residues: ATP synthase subunit delta (186 aa).

The protein belongs to the ATPase delta chain family. As to quaternary structure, F-type ATPases have 2 components, F(1) - the catalytic core - and F(0) - the membrane proton channel. F(1) has five subunits: alpha(3), beta(3), gamma(1), delta(1), epsilon(1). F(0) has three main subunits: a(1), b(2) and c(10-14). The alpha and beta chains form an alternating ring which encloses part of the gamma chain. F(1) is attached to F(0) by a central stalk formed by the gamma and epsilon chains, while a peripheral stalk is formed by the delta and b chains.

Its subcellular location is the cell inner membrane. Its function is as follows. F(1)F(0) ATP synthase produces ATP from ADP in the presence of a proton or sodium gradient. F-type ATPases consist of two structural domains, F(1) containing the extramembraneous catalytic core and F(0) containing the membrane proton channel, linked together by a central stalk and a peripheral stalk. During catalysis, ATP synthesis in the catalytic domain of F(1) is coupled via a rotary mechanism of the central stalk subunits to proton translocation. This protein is part of the stalk that links CF(0) to CF(1). It either transmits conformational changes from CF(0) to CF(1) or is implicated in proton conduction. In Chelativorans sp. (strain BNC1), this protein is ATP synthase subunit delta.